Reading from the N-terminus, the 157-residue chain is Small ribosomal subunit protein uS7 (157 aa).

Belongs to the universal ribosomal protein uS7 family. Part of the 30S ribosomal subunit. Contacts proteins S9 and S11.

Functionally, one of the primary rRNA binding proteins, it binds directly to 16S rRNA where it nucleates assembly of the head domain of the 30S subunit. Is located at the subunit interface close to the decoding center, probably blocks exit of the E-site tRNA. This is Small ribosomal subunit protein uS7 from Roseiflexus sp. (strain RS-1).